The sequence spans 1012 residues: MLIKRRAFLKLTAAGATLSAFGGLGVDLAPAKAQAATMALKTVDAKQTTSVCCYCSVGCGLIVHTDKKTNRAINVEGDPDHPINEGSLCAKGASTWQLAENERRPANPLYRAPGSDQWEEKSWDWMLDTIAERVAKTREATFVTKNAKGQVVNRCDGIASVGSAAMDNEECWIYQAWLRSLGLFYIEHQARIUHSATVAALAESYGRGAMTNHWIDLKNSDVILMMGSNPAENHPISFKWVMRAKDKGATLIHVDPRYTRTSTKCDLYAPLRSGSDIAFLNGMTKYILEKELYFKDYVVNYTNASFIVGEGFAFEEGLFAGYNKETRKYDKSKWGFERDENGNPKRDETLKHPRCVFQIMKKHYERYDLDKISAICGTPKELILKVYDAYCATGKPDKAGTIMYAMGWTQHTVGVQNIRAMSINQLLLGNIGVAGGGVNALRGEANVQGSTDHGLLMHIYPGYLGTARASIPTYEEYTKKFTPVSKDPQSANWWSNFPKYSASYIKSMWPDADLNEAYGYLPKGEDGKDYSWLTLFDDMFQGKIKGFFAWGQNPACSGANSNKTREALTKLDWMVNVNIFDNETGSFWRGPDMDPKKIKTEVFFLPCAVAIEKEGSISNSGRWMQWRYVGPEPRKNAIPDGDLIVELAKRVQKLLAKTPGKLAAPVTKLKTDYWVNDHGHFDPHKIAKLINGFALKDFKVGDVEYKAGQQIATFGHLQADGSTTSGCWIYTGSYTEKGNMAARRDKTQTDMQAKIGLYPGWTWAWPVNRRIIYNRASVDLNGKPYAPEKAVVEWNAAEKKWVGDVPDGPWPPQADKEKGKRAFIMKPEGYAYLYGPGREDGPLPEYYEPMECPVIEHPFSKTLHNPTALHFATEEKAVCDPRYPFICSTYRVTEHWQTGLMTRNTPWLLEAEPQMFCEMSEELATLRGIKNGDKVILESVRGKLWAKAIITKRIKPFAIQGQQVHMVGIPWHYGWSFPKNGGDAANILTPSVGDPNTGIPETKAFMVNVTKA.

The tat-type signal signal peptide spans 1–35; that stretch reads MLIKRRAFLKLTAAGATLSAFGGLGVDLAPAKAQA. In terms of domain architecture, 4Fe-4S Mo/W bis-MGD-type spans 45–103; the sequence is AKQTTSVCCYCSVGCGLIVHTDKKTNRAINVEGDPDHPINEGSLCAKGASTWQLAENER. [4Fe-4S] cluster is bound by residues C52, C55, C59, and C89. U193 contributes to the W-bis(molybdopterin guanine dinucleotide) binding site. Position 193 (U193) is a non-standard amino acid, selenocysteine. 5 residues coordinate Ca(2+): T393, K395, K398, L428, and N430. C852 and C879 are oxidised to a cystine.

Belongs to the prokaryotic molybdopterin-containing oxidoreductase family. Heterodimer of alpha (FdhA) and beta (FdhB) subunits. It depends on [4Fe-4S] cluster as a cofactor. The cofactor is W-bis(molybdopterin guanine dinucleotide). Post-translationally, the disulfide bond is likely to be broken in the active form of this enzyme. In terms of processing, predicted to be exported by the Tat system. The position of the signal peptide cleavage has been experimentally proven.

Its subcellular location is the periplasm. The enzyme catalyses formate + NAD(+) = CO2 + NADH. Functionally, alpha chain of the formate dehydrogenase (FDH) catalyze the reversible two-electron oxidation of formate to carbon dioxide. FDH loses activity in the presence of air, but this activity can be restored. The alpha subunit of formate dehydrogenase forms the active site. In Megalodesulfovibrio gigas (Desulfovibrio gigas), this protein is Formate dehydrogenase subunit alpha.